The sequence spans 197 residues: Imidazoleglycerol-phosphate dehydratase (197 aa).

It belongs to the imidazoleglycerol-phosphate dehydratase family.

Its subcellular location is the cytoplasm. The enzyme catalyses D-erythro-1-(imidazol-4-yl)glycerol 3-phosphate = 3-(imidazol-4-yl)-2-oxopropyl phosphate + H2O. Its pathway is amino-acid biosynthesis; L-histidine biosynthesis; L-histidine from 5-phospho-alpha-D-ribose 1-diphosphate: step 6/9. This is Imidazoleglycerol-phosphate dehydratase from Nitrosomonas europaea (strain ATCC 19718 / CIP 103999 / KCTC 2705 / NBRC 14298).